A 227-amino-acid polypeptide reads, in one-letter code: NAD(P)H-hydrate epimerase (227 aa).

Residues 12-221 (SRLVDELAIA…DIGVPRALLE (210 aa)) enclose the YjeF N-terminal domain. Residue 59–63 (NNGGD) participates in (6S)-NADPHX binding. N60 and D131 together coordinate K(+). Residues 135-141 (GTGATGE) and D164 each bind (6S)-NADPHX. T167 is a K(+) binding site.

This sequence belongs to the NnrE/AIBP family. Requires K(+) as cofactor.

The catalysed reaction is (6R)-NADHX = (6S)-NADHX. It carries out the reaction (6R)-NADPHX = (6S)-NADPHX. Its function is as follows. Catalyzes the epimerization of the S- and R-forms of NAD(P)HX, a damaged form of NAD(P)H that is a result of enzymatic or heat-dependent hydration. This is a prerequisite for the S-specific NAD(P)H-hydrate dehydratase to allow the repair of both epimers of NAD(P)HX. This Pirellula staleyi (strain ATCC 27377 / DSM 6068 / ICPB 4128) (Pirella staleyi) protein is NAD(P)H-hydrate epimerase.